Reading from the N-terminus, the 152-residue chain is Transcriptional repressor NrdR (152 aa).

A zinc finger lies at cysteine 3–cysteine 34. Positions isoleucine 49–glutamate 139 constitute an ATP-cone domain.

This sequence belongs to the NrdR family. It depends on Zn(2+) as a cofactor.

Its function is as follows. Negatively regulates transcription of bacterial ribonucleotide reductase nrd genes and operons by binding to NrdR-boxes. The polypeptide is Transcriptional repressor NrdR (Opitutus terrae (strain DSM 11246 / JCM 15787 / PB90-1)).